Here is a 512-residue protein sequence, read N- to C-terminus: Cytochrome P450 26B1 (512 aa).

Cys-441 serves as a coordination point for heme.

Belongs to the cytochrome P450 family. Heme is required as a cofactor.

It localises to the endoplasmic reticulum membrane. The protein localises to the microsome membrane. The catalysed reaction is all-trans-retinoate + reduced [NADPH--hemoprotein reductase] + O2 = all-trans-4-hydroxyretinoate + oxidized [NADPH--hemoprotein reductase] + H2O + H(+). It catalyses the reaction all-trans-retinoate + reduced [NADPH--hemoprotein reductase] + O2 = all-trans-18-hydroxyretinoate + oxidized [NADPH--hemoprotein reductase] + H2O + H(+). In terms of biological role, a cytochrome P450 monooxygenase involved in the metabolism of retinoates (RAs), the active metabolites of vitamin A, and critical signaling molecules in animals. RAs exist as at least four different isomers: all-trans-RA (atRA), 9-cis-RA, 13-cis-RA, and 9,13-dicis-RA, where atRA is considered to be the biologically active isomer, although 9-cis-RA and 13-cis-RA also have activity. Catalyzes the hydroxylation of atRA primarily at C-4 and C-18, thereby contributing to the regulation of atRA homeostasis and signaling. Hydroxylation of atRA limits its biological activity and initiates a degradative process leading to its eventual elimination. Involved in the convertion of atRA to all-trans-4-oxo-RA. Can oxidize all-trans-13,14-dihydroretinoate (DRA) to metabolites which could include all-trans-4-oxo-DRA, all-trans-4-hydroxy-DRA, all-trans-5,8-epoxy-DRA, and all-trans-18-hydroxy-DRA. Shows preference for the following substrates: atRA &gt; 9-cis-RA &gt; 13-cis-RA. Plays a central role in germ cell development: acts by degrading RAs in the developing testis, preventing STRA8 expression, thereby leading to delay of meiosis. Required for the maintenance of the undifferentiated state of male germ cells during embryonic development in Sertoli cells, inducing arrest in G0 phase of the cell cycle and preventing meiotic entry. Plays a role in skeletal development, both at the level of patterning and in the ossification of bone and the establishment of some synovial joints. Essential for postnatal survival. Functionally, also has a significant activity in oxidation of tazarotenic acid and may therefore metabolize that xenobiotic in vivo. In Rattus norvegicus (Rat), this protein is Cytochrome P450 26B1 (Cyp26b1).